The primary structure comprises 122 residues: Large ribosomal subunit protein uL14 (122 aa).

The protein belongs to the universal ribosomal protein uL14 family. In terms of assembly, part of the 50S ribosomal subunit. Forms a cluster with proteins L3 and L19. In the 70S ribosome, L14 and L19 interact and together make contacts with the 16S rRNA in bridges B5 and B8.

In terms of biological role, binds to 23S rRNA. Forms part of two intersubunit bridges in the 70S ribosome. The sequence is that of Large ribosomal subunit protein uL14 from Delftia acidovorans (strain DSM 14801 / SPH-1).